The chain runs to 286 residues: Urease accessory protein UreD 2 (286 aa).

The protein belongs to the UreD family. UreD, UreF and UreG form a complex that acts as a GTP-hydrolysis-dependent molecular chaperone, activating the urease apoprotein by helping to assemble the nickel containing metallocenter of UreC. The UreE protein probably delivers the nickel.

The protein localises to the cytoplasm. Required for maturation of urease via the functional incorporation of the urease nickel metallocenter. The sequence is that of Urease accessory protein UreD 2 from Bradyrhizobium sp. (strain BTAi1 / ATCC BAA-1182).